We begin with the raw amino-acid sequence, 365 residues long: Probable dual-specificity RNA methyltransferase RlmN (365 aa).

Glu99 (proton acceptor) is an active-site residue. Residues Gln105–Asp344 enclose the Radical SAM core domain. Cys112 and Cys349 are disulfide-bonded. Residues Cys119, Cys123, and Cys126 each contribute to the [4Fe-4S] cluster site. S-adenosyl-L-methionine-binding positions include Gly171 to Glu172, Ser203, Ser227 to His229, and Asn305. The S-methylcysteine intermediate role is filled by Cys349.

It belongs to the radical SAM superfamily. RlmN family. [4Fe-4S] cluster is required as a cofactor.

Its subcellular location is the cytoplasm. It catalyses the reaction adenosine(2503) in 23S rRNA + 2 reduced [2Fe-2S]-[ferredoxin] + 2 S-adenosyl-L-methionine = 2-methyladenosine(2503) in 23S rRNA + 5'-deoxyadenosine + L-methionine + 2 oxidized [2Fe-2S]-[ferredoxin] + S-adenosyl-L-homocysteine. The catalysed reaction is adenosine(37) in tRNA + 2 reduced [2Fe-2S]-[ferredoxin] + 2 S-adenosyl-L-methionine = 2-methyladenosine(37) in tRNA + 5'-deoxyadenosine + L-methionine + 2 oxidized [2Fe-2S]-[ferredoxin] + S-adenosyl-L-homocysteine. Functionally, specifically methylates position 2 of adenine 2503 in 23S rRNA and position 2 of adenine 37 in tRNAs. The sequence is that of Probable dual-specificity RNA methyltransferase RlmN from Lactococcus lactis subsp. cremoris (strain SK11).